A 365-amino-acid chain; its full sequence is tRNA N6-adenosine threonylcarbamoyltransferase (365 aa).

Fe cation-binding residues include H119 and H123. Substrate contacts are provided by residues 141–145 (LVSGG), D174, G187, and N288. D316 lines the Fe cation pocket.

It belongs to the KAE1 / TsaD family. It depends on Fe(2+) as a cofactor.

Its subcellular location is the cytoplasm. The enzyme catalyses L-threonylcarbamoyladenylate + adenosine(37) in tRNA = N(6)-L-threonylcarbamoyladenosine(37) in tRNA + AMP + H(+). Required for the formation of a threonylcarbamoyl group on adenosine at position 37 (t(6)A37) in tRNAs that read codons beginning with adenine. Is involved in the transfer of the threonylcarbamoyl moiety of threonylcarbamoyl-AMP (TC-AMP) to the N6 group of A37, together with TsaE and TsaB. TsaD likely plays a direct catalytic role in this reaction. This Rhizobium etli (strain ATCC 51251 / DSM 11541 / JCM 21823 / NBRC 15573 / CFN 42) protein is tRNA N6-adenosine threonylcarbamoyltransferase.